The chain runs to 308 residues: Protoheme IX farnesyltransferase (308 aa).

Transmembrane regions (helical) follow at residues valine 31–valine 51, proline 53–leucine 73, asparagine 102–threonine 122, leucine 124–leucine 144, threonine 149–serine 169, alanine 170–threonine 190, leucine 240–leucine 260, and tyrosine 288–phenylalanine 308.

Belongs to the UbiA prenyltransferase family. Protoheme IX farnesyltransferase subfamily.

The protein localises to the cell membrane. The enzyme catalyses heme b + (2E,6E)-farnesyl diphosphate + H2O = Fe(II)-heme o + diphosphate. It functions in the pathway porphyrin-containing compound metabolism; heme O biosynthesis; heme O from protoheme: step 1/1. In terms of biological role, converts heme B (protoheme IX) to heme O by substitution of the vinyl group on carbon 2 of heme B porphyrin ring with a hydroxyethyl farnesyl side group. The protein is Protoheme IX farnesyltransferase of Mycobacterium avium (strain 104).